The following is a 171-amino-acid chain: uncharacterized protein (171 aa).

In terms of domain architecture, HTH marR-type spans 33 to 166 (AISIATNLYR…LTGLLRKVAD (134 aa)). Positions 80–103 (TRKIAELSGISTATASNVIKTLEK) form a DNA-binding region, H-T-H motif.

This is an uncharacterized protein from Bacillus subtilis (strain 168).